A 285-amino-acid polypeptide reads, in one-letter code: Phosphatidylglycerol--prolipoprotein diacylglyceryl transferase (285 aa).

4 helical membrane-spanning segments follow: residues 30–50 (LEIRWYALSYVFGILFAHWHI), 67–87 (LMLWAVIGIILGGRTAYILLY), 103–123 (WHGGMSMHGGYVGCIIAVSIV), and 129–149 (VRVMPVLDLCACAAPLGLFLG). Residue Arg-150 participates in a 1,2-diacyl-sn-glycero-3-phospho-(1'-sn-glycerol) binding. The next 3 membrane-spanning stretches (helical) occupy residues 184-204 (SQVYEAMLEGLLPLLFMSILA), 213-233 (FGVLSHMFGAWYGIVRCAVEF), and 252-272 (GQVLSAPIAVVGIFMLVLTVL).

It belongs to the Lgt family.

The protein resides in the cell inner membrane. It carries out the reaction L-cysteinyl-[prolipoprotein] + a 1,2-diacyl-sn-glycero-3-phospho-(1'-sn-glycerol) = an S-1,2-diacyl-sn-glyceryl-L-cysteinyl-[prolipoprotein] + sn-glycerol 1-phosphate + H(+). Its pathway is protein modification; lipoprotein biosynthesis (diacylglyceryl transfer). Its function is as follows. Catalyzes the transfer of the diacylglyceryl group from phosphatidylglycerol to the sulfhydryl group of the N-terminal cysteine of a prolipoprotein, the first step in the formation of mature lipoproteins. This is Phosphatidylglycerol--prolipoprotein diacylglyceryl transferase from Anaplasma marginale (strain Florida).